A 226-amino-acid chain; its full sequence is Putative N-acetylmannosamine-6-phosphate 2-epimerase 1 (226 aa).

Belongs to the NanE family.

The enzyme catalyses an N-acyl-D-glucosamine 6-phosphate = an N-acyl-D-mannosamine 6-phosphate. It functions in the pathway amino-sugar metabolism; N-acetylneuraminate degradation; D-fructose 6-phosphate from N-acetylneuraminate: step 3/5. Converts N-acetylmannosamine-6-phosphate (ManNAc-6-P) to N-acetylglucosamine-6-phosphate (GlcNAc-6-P). This is Putative N-acetylmannosamine-6-phosphate 2-epimerase 1 from Salmonella paratyphi A (strain ATCC 9150 / SARB42).